The following is a 143-amino-acid chain: Small ribosomal subunit protein uS12 (143 aa).

It belongs to the universal ribosomal protein uS12 family. Component of the 40S small ribosomal subunit.

It localises to the cytoplasm. The protein localises to the cytosol. It is found in the rough endoplasmic reticulum. The polypeptide is Small ribosomal subunit protein uS12 (rps23) (Gillichthys mirabilis (Long-jawed mudsucker)).